A 409-amino-acid chain; its full sequence is L-cysteine:1D-myo-inositol 2-amino-2-deoxy-alpha-D-glucopyranoside ligase (409 aa).

Position 43 (cysteine 43) interacts with Zn(2+). Residues 43–46, threonine 58, and 81–83 contribute to the L-cysteinyl-5'-AMP site; these read CGIT and NVT. Positions 45–55 match the 'HIGH' region motif; that stretch reads ITPYDATHMGH. Positions 183-188 match the 'ERGGDP' region motif; sequence ERGGDP. L-cysteinyl-5'-AMP is bound at residue tryptophan 224. Residue cysteine 228 coordinates Zn(2+). 246-248 contacts L-cysteinyl-5'-AMP; it reads GSD. Zn(2+) is bound at residue histidine 253. Valine 280 is a binding site for L-cysteinyl-5'-AMP. Positions 286-290 match the 'KMSKS' region motif; it reads KMSKS.

Belongs to the class-I aminoacyl-tRNA synthetase family. MshC subfamily. As to quaternary structure, monomer. Zn(2+) serves as cofactor.

The enzyme catalyses 1D-myo-inositol 2-amino-2-deoxy-alpha-D-glucopyranoside + L-cysteine + ATP = 1D-myo-inositol 2-(L-cysteinylamino)-2-deoxy-alpha-D-glucopyranoside + AMP + diphosphate + H(+). Functionally, catalyzes the ATP-dependent condensation of GlcN-Ins and L-cysteine to form L-Cys-GlcN-Ins. This is L-cysteine:1D-myo-inositol 2-amino-2-deoxy-alpha-D-glucopyranoside ligase from Streptomyces scabiei (strain 87.22).